Reading from the N-terminus, the 688-residue chain is Polyribonucleotide nucleotidyltransferase (688 aa).

Mg(2+) is bound by residues Asp484 and Asp490. One can recognise a KH domain in the interval 550–609 (PTTEIFNVAPDKIVEIIGQGGRVIKEIVEKFEVKIDLNKPSGEVKIMGNKERVLKTKEFI). Residues 626-688 (DEVLEAQVKR…NKGKIALDLA (63 aa)) form the S1 motif domain.

The protein belongs to the polyribonucleotide nucleotidyltransferase family. Mg(2+) serves as cofactor.

The protein resides in the cytoplasm. The enzyme catalyses RNA(n+1) + phosphate = RNA(n) + a ribonucleoside 5'-diphosphate. Its function is as follows. Involved in mRNA degradation. Catalyzes the phosphorolysis of single-stranded polyribonucleotides processively in the 3'- to 5'-direction. The protein is Polyribonucleotide nucleotidyltransferase of Helicobacter pylori (strain ATCC 700392 / 26695) (Campylobacter pylori).